The following is a 151-amino-acid chain: Protein A151R (151 aa).

The protein belongs to the asfivirus A151R family. As to quaternary structure, monomer. Homodimer. Interacts with protein B119L. Interacts with membrane protein E248R. The cofactor is Zn(2+).

In terms of biological role, may participate in a redox cascade for the formation of disulfide bonds in viral proteins. The chain is Protein A151R from Ornithodoros (relapsing fever ticks).